Here is a 414-residue protein sequence, read N- to C-terminus: Bystin (414 aa).

Basic residues predominate over residues methionine 1–histidine 11. The tract at residues methionine 1–aspartate 91 is disordered. Over residues alanine 12–valine 24 the composition is skewed to basic and acidic residues. The span at arginine 25–glycine 34 shows a compositional bias: basic residues.

The protein belongs to the bystin family.

The protein resides in the nucleus. The protein localises to the nucleolus. In terms of biological role, required for processing of 20S pre-rRNA precursor and biogenesis of 40S ribosomal subunits. The chain is Bystin (bysl) from Monosiga brevicollis (Choanoflagellate).